The sequence spans 155 residues: Protein-export protein SecB (155 aa).

The protein belongs to the SecB family. In terms of assembly, homotetramer, a dimer of dimers. One homotetramer interacts with 1 SecA dimer.

Its subcellular location is the cytoplasm. In terms of biological role, one of the proteins required for the normal export of preproteins out of the cell cytoplasm. It is a molecular chaperone that binds to a subset of precursor proteins, maintaining them in a translocation-competent state. It also specifically binds to its receptor SecA. In Escherichia fergusonii (strain ATCC 35469 / DSM 13698 / CCUG 18766 / IAM 14443 / JCM 21226 / LMG 7866 / NBRC 102419 / NCTC 12128 / CDC 0568-73), this protein is Protein-export protein SecB.